The primary structure comprises 261 residues: Thioredoxin-like protein HCF164, chloroplastic (261 aa).

The transit peptide at Met1–Arg40 directs the protein to the chloroplast. The interval Val39–Asn91 is disordered. Residues Ser63–Ser84 are compositionally biased toward low complexity. A Thioredoxin domain is found at Val101–Ala229. Active-site nucleophile residues include Cys150 and Cys153. The cysteines at positions 150 and 153 are disulfide-linked.

The protein belongs to the thioredoxin family. Interacts in vitro with LTO1.

It is found in the plastid. The protein localises to the chloroplast thylakoid membrane. In terms of biological role, thiol-disulfide oxidoreductase that participates in various redox reactions in the chloroplast. Mediates the reduction of PSI-N in the thylakoid lumen. May interact and probably reduce other target proteins of the thylakoid membrane, such as FTSH2, FTSH8, LHCB5, atpA, atpB, atpE, petA and petC. Involved in the biogenesis of the plastid cytochrome b6f complex. Reducing equivalents are provided by stromal M-type thioredoxins and probably transduced through the thylakoid membrane by CCDA. Possesses low insulin disulfide bonds reducing activity. The sequence is that of Thioredoxin-like protein HCF164, chloroplastic from Arabidopsis thaliana (Mouse-ear cress).